We begin with the raw amino-acid sequence, 336 residues long: tRNA dimethylallyltransferase (336 aa).

19 to 26 (GPTASGKT) lines the ATP pocket. Residue 21 to 26 (TASGKT) coordinates substrate.

Belongs to the IPP transferase family. In terms of assembly, monomer. Requires Mg(2+) as cofactor.

The catalysed reaction is adenosine(37) in tRNA + dimethylallyl diphosphate = N(6)-dimethylallyladenosine(37) in tRNA + diphosphate. Functionally, catalyzes the transfer of a dimethylallyl group onto the adenine at position 37 in tRNAs that read codons beginning with uridine, leading to the formation of N6-(dimethylallyl)adenosine (i(6)A). This chain is tRNA dimethylallyltransferase, found in Bifidobacterium adolescentis (strain ATCC 15703 / DSM 20083 / NCTC 11814 / E194a).